Reading from the N-terminus, the 137-residue chain is Small ribosomal subunit protein eS6 (137 aa).

Residues 114–127 (LPVEEAPAEDAPES) show a composition bias toward acidic residues. Residues 114–137 (LPVEEAPAEDAPESAEEKSEDKKE) form a disordered region. Basic and acidic residues predominate over residues 128-137 (AEEKSEDKKE).

The protein belongs to the eukaryotic ribosomal protein eS6 family.

The chain is Small ribosomal subunit protein eS6 from Nitrosopumilus maritimus (strain SCM1).